The sequence spans 236 residues: Large ribosomal subunit protein uL3 (236 aa).

The tract at residues 215 to 236 is disordered; that stretch reads PAPEPAAPVAAAAAGTGEEASA. The span at 221–236 shows a compositional bias: low complexity; it reads APVAAAAAGTGEEASA.

The protein belongs to the universal ribosomal protein uL3 family. In terms of assembly, part of the 50S ribosomal subunit. Forms a cluster with proteins L14 and L19.

One of the primary rRNA binding proteins, it binds directly near the 3'-end of the 23S rRNA, where it nucleates assembly of the 50S subunit. In Parafrankia sp. (strain EAN1pec), this protein is Large ribosomal subunit protein uL3.